The primary structure comprises 594 residues: MAQTSASQGYIDDSSSFDSFHLDSRLSQAIRSIGFKHPTLIQSSAIPLALQEKRDIIAKASTGSGKTLAYLIPVIQTILDHKKADQNDEGATLGVILVPTRELAQQVLEVVEKLIVFCSQEIKCLNLSSGNVSGNLLKSLLTENPEILIATPAKLVDLLDAQDVNIDRLKFLVIDEVDLVLTFGYQEDLTKISERLPLRKSLQTFLMSATLNDDIQHLKQQFCRSPAILKLNDDEVNKDQTKLIQYYVKVGEFDKFLLCYVIFKLGLIKGKTLIFVNNIDRGYRLKLVLEQFGIKSCILNSELPANSRQHIVEEFNKNVYQLLIATDDTEYIKEEDEDLESEKTEDGLVEVVDDSTVTTKDNAKKQKKPKLNVEKDKEYGVSRGVDFKNVACVLNFDLPTTAKSYVHRIGRTARAGKSGISISFVVPLKEFGKHKPSMIKSAKKDEKILGRIIKQQAKLGFELQPYNFDIKQVEGFRYRMEDGFRAVTQVAIREARIKELKQELLASEKLKRHFEENPHDLESLRHDKELHPARVQQHLKRVPDYLLPETARKDNKKIGFVPFHKNSHRKNGRVVKKKGNVQRKGKSDPLKSFK.

The Q motif motif lies at Ser15–Ser43. One can recognise a Helicase ATP-binding domain in the interval Pro47 to Leu229. An ATP-binding site is contributed by Ala60–Thr67. Positions Asp175–Asp178 match the DEAD box motif. A Helicase C-terminal domain is found at Lys242 to Glu474. The tract at residues Pro562 to Lys594 is disordered. Residues Lys565 to Lys584 are compositionally biased toward basic residues. Over residues Gly585–Lys594 the composition is skewed to basic and acidic residues.

The protein belongs to the DEAD box helicase family. DDX56/DBP9 subfamily.

It localises to the nucleus. It is found in the nucleolus. The catalysed reaction is ATP + H2O = ADP + phosphate + H(+). In terms of biological role, ATP-binding RNA helicase involved in the biogenesis of 60S ribosomal subunits and is required for the normal formation of 25S and 5.8S rRNAs. The sequence is that of ATP-dependent RNA helicase DBP9 (DBP9) from Kluyveromyces lactis (strain ATCC 8585 / CBS 2359 / DSM 70799 / NBRC 1267 / NRRL Y-1140 / WM37) (Yeast).